The chain runs to 271 residues: Extracellular metalloprotease TRV_06892 (271 aa).

The N-terminal stretch at 1–19 is a signal peptide; sequence MRFSVLLTGLAAAGSIATA. An N-linked (GlcNAc...) asparagine glycan is attached at asparagine 136. Position 185 (histidine 185) interacts with Zn(2+). Glutamate 186 is a catalytic residue. Histidine 189 lines the Zn(2+) pocket. An N-linked (GlcNAc...) asparagine glycan is attached at asparagine 200. A disulfide bridge connects residues cysteine 222 and cysteine 248.

Belongs to the peptidase M43B family.

The protein localises to the secreted. Functionally, secreted metalloproteinase that allows assimilation of proteinaceous substrates. Plays a pivotal role as a pathogenicity determinant during infections and contributes to the ability of the pathogen to persist within the mammalian host. This is Extracellular metalloprotease TRV_06892 from Trichophyton verrucosum (strain HKI 0517).